Consider the following 327-residue polypeptide: tRNA-modifying protein YgfZ (327 aa).

2 residues coordinate folate: Trp-27 and Trp-189.

The protein belongs to the tRNA-modifying YgfZ family.

Its subcellular location is the cytoplasm. In terms of biological role, folate-binding protein involved in regulating the level of ATP-DnaA and in the modification of some tRNAs. It is probably a key factor in regulatory networks that act via tRNA modification, such as initiation of chromosomal replication. The chain is tRNA-modifying protein YgfZ from Klebsiella pneumoniae (strain 342).